Here is a 413-residue protein sequence, read N- to C-terminus: Serine hydroxymethyltransferase (413 aa).

Residues Leu-119 and 123–125 (GHL) contribute to the (6S)-5,6,7,8-tetrahydrofolate site. Lys-228 is subject to N6-(pyridoxal phosphate)lysine. 351–353 (SPF) contributes to the (6S)-5,6,7,8-tetrahydrofolate binding site.

It belongs to the SHMT family. Homodimer. The cofactor is pyridoxal 5'-phosphate.

The protein localises to the cytoplasm. It catalyses the reaction (6R)-5,10-methylene-5,6,7,8-tetrahydrofolate + glycine + H2O = (6S)-5,6,7,8-tetrahydrofolate + L-serine. It participates in one-carbon metabolism; tetrahydrofolate interconversion. It functions in the pathway amino-acid biosynthesis; glycine biosynthesis; glycine from L-serine: step 1/1. Catalyzes the reversible interconversion of serine and glycine with tetrahydrofolate (THF) serving as the one-carbon carrier. This reaction serves as the major source of one-carbon groups required for the biosynthesis of purines, thymidylate, methionine, and other important biomolecules. Also exhibits THF-independent aldolase activity toward beta-hydroxyamino acids, producing glycine and aldehydes, via a retro-aldol mechanism. The protein is Serine hydroxymethyltransferase of Clostridium botulinum (strain ATCC 19397 / Type A).